Reading from the N-terminus, the 594-residue chain is E3 ubiquitin-protein ligase TRAF7 (594 aa).

The disordered stretch occupies residues 1 to 33 (MPPINTPRRSDSAISVRSLHSESSMSLRSTFSL). Phosphoserine occurs at positions 12 and 15. The span at 15–29 (SVRSLHSESSMSLRS) shows a compositional bias: low complexity. The segment at 55-89 (CQLCCSVFKDPVITTCGHTFCRRCALKSEKCPVDN) adopts an RING-type zinc-finger fold. The TRAF-type zinc-finger motif lies at 146-216 (HESSCDYRPV…RFEGLKEFLQ (71 aa)). WD repeat units lie at residues 318–357 (GHQG…KCQK), 361–398 (GHDG…KVNT), 401–437 (AHDN…LKLK), 439–478 (ELTG…CIHV), 481–518 (TSGG…QVRT), 521–562 (GHVG…CTQT), and 565–593 (RHQG…KVWT).

It belongs to the WD repeat TRAF7 family. In terms of assembly, homodimer. Interacts with MAP3K3 and promotes the kinase activity of this enzyme. In terms of processing, phosphorylated by MAP3K3. Ubiquitinates itself upon phosphorylation. As to expression, ubiquitously expressed. Expression is relatively high in heart, liver, kidney, testis, prostate, thyroid, and salivary gland.

Its subcellular location is the cytoplasmic vesicle. It is found in the cytoplasm. The protein resides in the nucleus. It catalyses the reaction S-ubiquitinyl-[E2 ubiquitin-conjugating enzyme]-L-cysteine + [acceptor protein]-L-lysine = [E2 ubiquitin-conjugating enzyme]-L-cysteine + N(6)-ubiquitinyl-[acceptor protein]-L-lysine.. It participates in protein modification; protein ubiquitination. Functionally, E3 ubiquitin and SUMO-protein ligase that plays a role in different biological processes such as innate immunity, inflammation or apoptosis. Potentiates MAP3K3-mediated activation of the NF-kappa-B, JUN/AP1 and DDIT3 transcriptional regulators. Negatively regulates MYB transcriptional activity by sequestering it to the cytosol via SUMOylation. Plays a role in the phosphorylation of MAPK1 and/or MAPK3, probably via its interaction with MAP3K3. Negatively regulates RLR-mediated innate immunity by promoting 'Lys-48'-linked ubiquitination of TBK1 through its RING domain to inhibit the cellular antiviral response. Promotes 'Lys-29'-linked polyubiquitination of NEMO/IKBKG and RELA leading to targeting these two proteins to lysosomal degradative pathways, reducing the transcriptional activity of NF-kappa-B. The sequence is that of E3 ubiquitin-protein ligase TRAF7 from Mus musculus (Mouse).